A 351-amino-acid polypeptide reads, in one-letter code: dTDP-glucose 4,6-dehydratase (351 aa).

NAD(+) is bound by residues 12-13 (FI), 32-35 (DALT), 58-59 (DI), 80-84 (FAAES), and threonine 99. Substrate is bound at residue serine 84. Threonine 133 lines the substrate pocket. Aspartate 134 (proton donor) is an active-site residue. Active-site proton acceptor residues include glutamate 135 and tyrosine 158. 158–162 (YSASK) is a binding site for NAD(+). Asparagine 187 contacts substrate. Residue asparagine 188 coordinates NAD(+). Residues 197 to 198 (KL), 213 to 215 (PVY), arginine 222, asparagine 257, and 289 to 293 (DRPGH) each bind substrate.

This sequence belongs to the NAD(P)-dependent epimerase/dehydratase family. dTDP-glucose dehydratase subfamily. In terms of assembly, homodimer. Requires NAD(+) as cofactor.

The catalysed reaction is dTDP-alpha-D-glucose = dTDP-4-dehydro-6-deoxy-alpha-D-glucose + H2O. It participates in carbohydrate biosynthesis; dTDP-L-rhamnose biosynthesis. It functions in the pathway bacterial outer membrane biogenesis; LPS O-antigen biosynthesis. Its function is as follows. Catalyzes the dehydration of dTDP-D-glucose to form dTDP-6-deoxy-D-xylo-4-hexulose via a three-step process involving oxidation, dehydration and reduction. This chain is dTDP-glucose 4,6-dehydratase (rfbB), found in Xanthomonas campestris pv. campestris (strain ATCC 33913 / DSM 3586 / NCPPB 528 / LMG 568 / P 25).